The following is a 187-amino-acid chain: Elongation factor P (187 aa).

The protein belongs to the elongation factor P family.

The protein resides in the cytoplasm. The protein operates within protein biosynthesis; polypeptide chain elongation. In terms of biological role, involved in peptide bond synthesis. Stimulates efficient translation and peptide-bond synthesis on native or reconstituted 70S ribosomes in vitro. Probably functions indirectly by altering the affinity of the ribosome for aminoacyl-tRNA, thus increasing their reactivity as acceptors for peptidyl transferase. The sequence is that of Elongation factor P from Mycobacterium sp. (strain JLS).